The primary structure comprises 221 residues: Vesicle transport v-SNARE 13 (221 aa).

Residues 1–198 (MSQGFERYER…MTRRMNRNKW (198 aa)) lie on the Cytoplasmic side of the membrane. Residues 32–93 (EQKKQNLSEI…FKTEVKRITS (62 aa)) are a coiled coil. A helical; Anchor for type IV membrane protein membrane pass occupies residues 199-219 (TIGAIITVLVLAIIFILYFKL). Topologically, residues 220-221 (TR) are vesicular.

Belongs to the VTI1 family. As to quaternary structure, forms SNARE complexes with t-SNAREs. As to expression, expressed at low levels in roots, stems, flowers and leaves.

The protein resides in the vacuole membrane. The protein localises to the prevacuolar compartment membrane. It localises to the endosome membrane. Its subcellular location is the early endosome membrane. Its function is as follows. May function as a v-SNARE responsible for targeting vesicles involved in the secretory pathway. Involved in actin-dependent endosomal trafficking pathways associated with the vacuole within root hairs and root tip epidermal cells. Essential for cell wall organization and polarized root hair growth. Also required for the localization of SYP41 to the trans-Golgi network in root hair cells. The sequence is that of Vesicle transport v-SNARE 13 from Arabidopsis thaliana (Mouse-ear cress).